Here is a 184-residue protein sequence, read N- to C-terminus: MPVDAWIREEVEIPEGVEVTVEGYKVKVKGPKGELEREFFWPGIQIFTEDGNVVIYKDFPRRKDVAIARTFAAHIRNMIKGVTEGFTYKLKVVYSHFPISVKVQGDEVIIENFLGEKAPRKAKILPGVTVKVRGQEIIVEGIDKEAVGQTAANIEQATRITKWDRRIFQDGIYIVEKAGKPITF.

It belongs to the universal ribosomal protein uL6 family. In terms of assembly, part of the 50S ribosomal subunit.

In terms of biological role, this protein binds to the 23S rRNA, and is important in its secondary structure. It is located near the subunit interface in the base of the L7/L12 stalk, and near the tRNA binding site of the peptidyltransferase center. The polypeptide is Large ribosomal subunit protein uL6 (Pyrococcus furiosus (strain ATCC 43587 / DSM 3638 / JCM 8422 / Vc1)).